The sequence spans 689 residues: Pentatricopeptide repeat-containing protein At2g03380, mitochondrial (689 aa).

The transit peptide at 1–12 (MLRSITLSPTRR) directs the protein to the mitochondrion. 16 PPR repeats span residues 75–105 (DISI…IPEP), 106–140 (DFYL…GFRY), 141–171 (DDIV…LVKV), 175–205 (DNVV…ITLR), 206–240 (NVVC…NVLG), 241–275 (NEYT…GIEL), 276–306 (SSCL…HSHV), 307–341 (DLVM…EIKP), 342–372 (NCVT…SIKV), 376–406 (DTNV…ESEK), 407–441 (DIVA…SVTP), 442–476 (NGVT…GFLA), 479–509 (SVHV…IEEK), 510–544 (NTIT…QQKP), 545–580 (NEST…NFTP), and 581–611 (STKH…MPIQ). Positions 616-689 (CFGAFLHGCG…SKIAGHSTME (74 aa)) are type E motif; degenerate.

The protein belongs to the PPR family. PCMP-E subfamily.

The protein localises to the mitochondrion. This chain is Pentatricopeptide repeat-containing protein At2g03380, mitochondrial (PCMP-E47), found in Arabidopsis thaliana (Mouse-ear cress).